A 117-amino-acid polypeptide reads, in one-letter code: Ribonuclease P protein component (117 aa).

Belongs to the RnpA family. Consists of a catalytic RNA component (M1 or rnpB) and a protein subunit.

It carries out the reaction Endonucleolytic cleavage of RNA, removing 5'-extranucleotides from tRNA precursor.. RNaseP catalyzes the removal of the 5'-leader sequence from pre-tRNA to produce the mature 5'-terminus. It can also cleave other RNA substrates such as 4.5S RNA. The protein component plays an auxiliary but essential role in vivo by binding to the 5'-leader sequence and broadening the substrate specificity of the ribozyme. The sequence is that of Ribonuclease P protein component from Limosilactobacillus reuteri subsp. reuteri (strain JCM 1112) (Lactobacillus reuteri).